Here is a 132-residue protein sequence, read N- to C-terminus: Mercuric resistance operon regulatory protein (132 aa).

The 70-residue stretch at 2–71 folds into the HTH merR-type domain; the sequence is KFRIGELADK…LNEIDKLLGV (70 aa). Positions 5–24 form a DNA-binding region, H-T-H motif; the sequence is IGELADKCGVNKETIRYYER. Hg(2+) is bound by residues Cys-79, Cys-114, and Cys-123.

Homodimer.

Functionally, mediates the mercuric-dependent induction of mercury resistance operon. In the absence of mercury MerR represses transcription by binding tightly to the mer operator region; when mercury is present the dimeric complex binds a single ion and becomes a potent transcriptional activator, while remaining bound to the mer site. The protein is Mercuric resistance operon regulatory protein (merR1) of Bacillus cereus.